Here is a 79-residue protein sequence, read N- to C-terminus: uncharacterized protein (79 aa).

This is an uncharacterized protein from Streptomyces lividans.